The following is a 211-amino-acid chain: Uracil phosphoribosyltransferase (211 aa).

Residues Arg78, Arg103, and 130 to 138 (DPMLATGAT) each bind 5-phospho-alpha-D-ribose 1-diphosphate. Uracil is bound by residues Ile195 and 200-202 (GDA). Residue Asp201 participates in 5-phospho-alpha-D-ribose 1-diphosphate binding.

It belongs to the UPRTase family. Requires Mg(2+) as cofactor.

The enzyme catalyses UMP + diphosphate = 5-phospho-alpha-D-ribose 1-diphosphate + uracil. It functions in the pathway pyrimidine metabolism; UMP biosynthesis via salvage pathway; UMP from uracil: step 1/1. Its activity is regulated as follows. Allosterically activated by GTP. Functionally, catalyzes the conversion of uracil and 5-phospho-alpha-D-ribose 1-diphosphate (PRPP) to UMP and diphosphate. The protein is Uracil phosphoribosyltransferase of Renibacterium salmoninarum (strain ATCC 33209 / DSM 20767 / JCM 11484 / NBRC 15589 / NCIMB 2235).